The primary structure comprises 533 residues: Protein disulfide isomerase-like 1-5 (533 aa).

Residues 1-22 form the signal peptide; the sequence is MRARRVVAAAAVLLLFAVVAVA. 2 consecutive Thioredoxin domains span residues 51–196 and 387–516; these read LGGG…KDQT and LLEG…EKLQ. The Nucleophile role is filled by cysteine 97. Asparagine 151 carries N-linked (GlcNAc...) asparagine glycosylation. Catalysis depends on nucleophile residues cysteine 436 and cysteine 439. A disulfide bond links cysteine 436 and cysteine 439. The Prevents secretion from ER motif lies at 530-533; it reads KDEL.

This sequence belongs to the protein disulfide isomerase family.

The protein resides in the endoplasmic reticulum lumen. The enzyme catalyses Catalyzes the rearrangement of -S-S- bonds in proteins.. In terms of biological role, acts as a protein-folding catalyst that interacts with nascent polypeptides to catalyze the formation, isomerization, and reduction or oxidation of disulfide bonds. May play a role in storage protein biogenesis. This chain is Protein disulfide isomerase-like 1-5 (PDIL1-5), found in Oryza sativa subsp. japonica (Rice).